The following is a 142-amino-acid chain: Cytochrome c-type biogenesis protein CcmE (142 aa).

The Cytoplasmic portion of the chain corresponds to 1 to 2; sequence MK. Residues 3–23 form a helical; Signal-anchor for type II membrane protein membrane-spanning segment; sequence GKYLLGILVILGALGYMVFGG. Topologically, residues 24-142 are periplasmic; it reads LGRNLVYFLT…EVRKLIEEAQ (119 aa). Heme contacts are provided by H118 and Y122.

It belongs to the CcmE/CycJ family.

It is found in the cell inner membrane. Its function is as follows. Heme chaperone required for the biogenesis of c-type cytochromes. Transiently binds heme delivered by CcmC and transfers the heme to apo-cytochromes in a process facilitated by CcmF and CcmH. This is Cytochrome c-type biogenesis protein CcmE from Thermus thermophilus (strain ATCC 27634 / DSM 579 / HB8).